The primary structure comprises 26 residues: MVLVKTIKKLDGFIECLLMLNYKFLY.

Its subcellular location is the plastid. It localises to the chloroplast. This is an uncharacterized protein from Trieres chinensis (Marine centric diatom).